Consider the following 384-residue polypeptide: Substance-K receptor (384 aa).

The Extracellular segment spans residues 1 to 32 (MGAHAIVTDANISSSLENNTTGITAFSMPGWQ). 3 N-linked (GlcNAc...) asparagine glycosylation sites follow: Asn11, Asn18, and Asn19. A helical transmembrane segment spans residues 33–56 (LALWATAYLVLVLVAVTGNATVIW). Topologically, residues 57–69 (IILAHQRMRTVTN) are cytoplasmic. A helical membrane pass occupies residues 70-90 (YFIVNLALADLCMAAFNAAFN). Topologically, residues 91-107 (FVYASHNIWYFGRAFCH) are extracellular. An intrachain disulfide couples Cys106 to Cys181. A helical membrane pass occupies residues 108–129 (FQNLFPITAMFVSIYSMTAIAA). At 130–149 (DRYVAIVHPFQPRLSAPGTR) the chain is on the cytoplasmic side. The chain crosses the membrane as a helical span at residues 150–170 (AVIAGIWLLALALAFPQCFYS). Residues 171–196 (TITMDQGATKCVVVWPEDNGSKMLLL) are Extracellular-facing. Residues 197-218 (YHLVVIALIYVLPLLVMLLAYS) form a helical membrane-spanning segment. The Cytoplasmic portion of the chain corresponds to 219 to 251 (VIGLTLWRREVPRHQVHGASLRHLRAKKKFVKT). Residues 252 to 272 (MVLVVVTFAICWLPYHFYFIL) form a helical membrane-spanning segment. Residues 273 to 290 (GSFQEDIYYHKFIQQVYL) are Extracellular-facing. The helical transmembrane segment at 291–310 (ALFWLAMSSTMYNPIIYCCL) threads the bilayer. The Cytoplasmic segment spans residues 311-384 (NHRFRSGFRL…GPQDGLPDEP (74 aa)). Cys324 is lipidated: S-palmitoyl cysteine.

It belongs to the G-protein coupled receptor 1 family.

Its subcellular location is the cell membrane. This is a receptor for the tachykinin neuropeptide substance K (neurokinin A). It is associated with G proteins that activate a phosphatidylinositol-calcium second messenger system. This is Substance-K receptor (TACR2) from Canis lupus familiaris (Dog).